Reading from the N-terminus, the 118-residue chain is Large ribosomal subunit protein bL21c (118 aa).

This sequence belongs to the bacterial ribosomal protein bL21 family. Part of the 50S ribosomal subunit.

It localises to the plastid. Its subcellular location is the chloroplast. In terms of biological role, this protein binds to 23S rRNA. This is Large ribosomal subunit protein bL21c from Psilotum nudum (Whisk fern).